The chain runs to 105 residues: Met repressor (105 aa).

Belongs to the MetJ family. In terms of assembly, homodimer.

The protein resides in the cytoplasm. Functionally, this regulatory protein, when combined with SAM (S-adenosylmethionine) represses the expression of the methionine regulon and of enzymes involved in SAM synthesis. In Salmonella dublin (strain CT_02021853), this protein is Met repressor.